An 89-amino-acid chain; its full sequence is Small ribosomal subunit protein uS15 (89 aa).

This sequence belongs to the universal ribosomal protein uS15 family. Part of the 30S ribosomal subunit. Forms a bridge to the 50S subunit in the 70S ribosome, contacting the 23S rRNA.

Functionally, one of the primary rRNA binding proteins, it binds directly to 16S rRNA where it helps nucleate assembly of the platform of the 30S subunit by binding and bridging several RNA helices of the 16S rRNA. Its function is as follows. Forms an intersubunit bridge (bridge B4) with the 23S rRNA of the 50S subunit in the ribosome. The sequence is that of Small ribosomal subunit protein uS15 from Frankia alni (strain DSM 45986 / CECT 9034 / ACN14a).